The primary structure comprises 303 residues: Phytochrome-associated serine/threonine-protein phosphatase 3 (303 aa).

The Zn(2+) site is built by aspartate 50, histidine 52, aspartate 78, and asparagine 110. Catalysis depends on histidine 111, which acts as the Proton donor. 2 residues coordinate Zn(2+): histidine 160 and histidine 234.

The protein belongs to the PPP phosphatase family. PP-6 (PP-V) subfamily. As to quaternary structure, interacts with PHYA and PHYB, mostly when they are phosphorylated and in Pfr forms. Interacts with TAP46. Interacts with NRP. Interacts with PIN1 and PIN2. Interacts with ABI5. Interacts with PIF3 and PIF4. Protein phosphatase 6 (PP6) holoenzyme is a heterotrimeric complex formed by the catalytic subunit FYPP, a SAPS domain-containing subunit (SAL) and a protein phosphatase 2A regulatory subunit A (PP2AA). It depends on Zn(2+) as a cofactor. Mostly expressed in flowers. Also detected to a lower extent in stems and leaves. Expressed in roots.

The protein resides in the cytoplasm. The catalysed reaction is O-phospho-L-seryl-[protein] + H2O = L-seryl-[protein] + phosphate. The enzyme catalyses O-phospho-L-threonyl-[protein] + H2O = L-threonyl-[protein] + phosphate. Catalytic subunit of protein phosphatase 6 (PP6). Dephosphorylates phosphorylated phytochromes, with a preference toward Pfr forms. Plays a major role in the photoperiodic control of flowering time in long days by modulating phytochrome signals in flowering time control. Involved in the regulation of polar auxin transport in roots. Dephosphorylates directly the auxin efflux carriers PIN1 and PIN2, thus promoting their proper polar localization in root cell plasma membrane. Acts antagonistically with the protein kinase PID to regulate the reversible phosphorylation of PIN and polar targeting, subsequently impacting polar auxin transport and plant development. Involved in the regulation of abscisic acid (ABA) signaling during seed germination and postgermination seedling growth. Functions as a negative regulator of ABA signaling through direct dephosphorylation and destabilization of ABI5 protein. Acts antagonistically with the protein kinase SRK2E/SNRK2.6 to regulate ABI5 phosphorylation and ABA responses. Involved in the regulation of phosphorylation status in hypocotyl phototropism. Involved in the negative regulation of photomorphogenesis by controlling the stability and transcriptional activity of PIF3 and PIF4 proteins in the dark, via the regulation of their phosphorylation status. This is Phytochrome-associated serine/threonine-protein phosphatase 3 from Arabidopsis thaliana (Mouse-ear cress).